An 848-amino-acid polypeptide reads, in one-letter code: ATP-dependent RNA helicase dbp10 (848 aa).

Residues 22-43 form a disordered region; the sequence is DIATDNQKDKHENVGENVSDED. Positions 69–97 match the Q motif motif; the sequence is SNFQSMGLNQTLLRAIFKKGFKAPTPIQR. The region spanning 100-272 is the Helicase ATP-binding domain; sequence IPLLLEGRDV…KAGLQDPVLV (173 aa). An ATP-binding site is contributed by 113–120; the sequence is ARTGSGKT. Residues 220–223 carry the DEAD box motif; that stretch reads DEAD. The Helicase C-terminal domain maps to 330–480; sequence RKRALELALK…TSSKQVKTDS (151 aa). Residues 610–650 form a disordered region; it reads NKVKPKGIKSEVASDKITDSSPGNMSEASESELEEVFKNPK. The segment covering 617–627 has biased composition (basic and acidic residues); it reads IKSEVASDKIT. Positions 628-637 are enriched in polar residues; it reads DSSPGNMSEA. S638, S733, and S736 each carry phosphoserine. The interval 768 to 813 is disordered; sequence ANDSPIRENKRYKHNKLQTPKPADKFRDNYHKQNKRNREAKERGIG. The span at 789 to 812 shows a compositional bias: basic and acidic residues; the sequence is PADKFRDNYHKQNKRNREAKERGI.

This sequence belongs to the DEAD box helicase family. DDX54/DBP10 subfamily.

It is found in the nucleus. Its subcellular location is the nucleolus. The enzyme catalyses ATP + H2O = ADP + phosphate + H(+). Functionally, ATP-binding RNA helicase involved in the biogenesis of 60S ribosomal subunits and is required for the normal formation of 25S and 5.8S rRNAs. The chain is ATP-dependent RNA helicase dbp10 (dbp10) from Schizosaccharomyces pombe (strain 972 / ATCC 24843) (Fission yeast).